We begin with the raw amino-acid sequence, 768 residues long: C-type polyheme cytochrome OmcC (768 aa).

The signal sequence occupies residues 1 to 23 (MSRKVTKYSAVLAVSLFAAALAG). A lipid anchor (N-palmitoyl cysteine) is attached at Cys-24. Residue Cys-24 is the site of S-diacylglycerol cysteine attachment. The heme c site is built by Cys-48, Cys-51, His-52, Cys-80, Cys-83, His-84, Cys-112, Cys-115, His-116, Cys-148, Cys-151, His-152, Cys-193, Cys-196, His-197, Cys-238, Cys-241, His-242, Cys-320, Cys-323, His-324, Cys-405, Cys-408, His-409, Cys-454, Cys-457, His-458, Cys-504, Cys-507, His-508, Cys-579, Cys-582, His-583, Cys-611, Cys-614, and His-615.

Post-translationally, binds 12 heme c groups per subunit.

It localises to the cell outer membrane. Its function is as follows. Not involved in Fe(3+) reduction. This chain is C-type polyheme cytochrome OmcC (omcC), found in Geobacter sulfurreducens (strain ATCC 51573 / DSM 12127 / PCA).